Reading from the N-terminus, the 308-residue chain is MSHQLPDVQASQPDVTVGLSQVGVTGVEKLVKIARDGKRPLVLMAEFEVFVDLPGGRKGIDMSRNMQVIDEVLEAAVSEPAYRVEDMCGDAAERLLAKHEYTTTAEVSMTAELVVREDTPASGLSTQSTAEIIASATATDEGTREEIGAEVVGMTVCPCSQGMSASRARDVLQDLAVDDDTIEEFLDKVPQPGHSQRGHATLTVETQGSPEVDLMDLIDIARDSMSARIYNLAKRPDEDHMTYHAHANAKFVEDCVRSMAELSLEALDHLGDDAVVHMKQSNDESIHQHNAHAEREVTLGQLRDELDA.

The tract at residues 282–308 (NDESIHQHNAHAEREVTLGQLRDELDA) is disordered.

It belongs to the GTP cyclohydrolase IV family. In terms of assembly, homodimer. The cofactor is Fe(2+).

The enzyme catalyses GTP + H2O = 7,8-dihydroneopterin 2',3'-cyclic phosphate + formate + diphosphate + H(+). It functions in the pathway cofactor biosynthesis; 5,6,7,8-tetrahydromethanopterin biosynthesis. In terms of biological role, converts GTP to 7,8-dihydro-D-neopterin 2',3'-cyclic phosphate, the first intermediate in the biosynthesis of coenzyme methanopterin. Involved in archaeosine (G(+)) and folate biosynthesis. This chain is GTP cyclohydrolase MptA, found in Haloferax volcanii (strain ATCC 29605 / DSM 3757 / JCM 8879 / NBRC 14742 / NCIMB 2012 / VKM B-1768 / DS2) (Halobacterium volcanii).